The chain runs to 792 residues: MLLSRKLLNTLFPIFNKVSNQELETMLNSIGVEVENIIKFPRTENLIVGEIKKVEKHPNADKLNICEVFFENKIHVIICGAQNVRPGLKVIVAKVGTKMLDGRLIEAKDLLGVKSNGMICAYAELTTKTDVCSYDEIENIIELDNDAKLNDIDPLKYIGLDDEILDLSVPSNRNELNGVIPIAYDLISLYFPKSKIDFSLKNIENQKKTSIKINIDKELCRFFGVIDVSNVEIKTSNWKIKSFLLNCGITPINTIVDITNLNAIITSVPCHAYDKDKLGKEIAVSLNAHKEKFLALNDKEYVVENKSAVSVISNNKIVSLASVIGSKENSISNSTKNVLFEIGNFDNMAIRDASNKLGIKTNASTLGSKTIPLWITYKSFDYLIGLLKDLNIKVSSVNYVGDKLKDNLIDFDSQTIQDLLGQKTDVEKNLKLMGFNFVGKKVKAPVYREDLENISDLVEELTKKINVNNLELKPIESSFVDFEFDNFEENWNFLEKYFINKGFTLVKTLNLTSLENNKAFNLFGSKKSIKIMNPISSEREYFRNNLIQQHLEVLSNNYAHKINLYNIFEIQGLNYDGLWNKHLCLTLPIEHFNNKINNSKIVIDLLFIKSILTDLFNVFNIPFEIKAIENLSNDIEFISTNNGFEIYVKNKLIGIASQISPEILNKYKLDSSKPIYFVELIINDLLDSKISKSITVSDEKKEHNIARSITLSLDRNQNYKKIESVLDNYKNNLNLLDKFEIESVFIKDNKPSYTFSLEINPSKLNKKETNEINEIVERLIKDLINEGAEIKR.

Residues 40-156 (FPRTENLIVG…AKLNDIDPLK (117 aa)) enclose the tRNA-binding domain. One can recognise a B5 domain in the interval 404–472 (LKDNLIDFDS…KKINVNNLEL (69 aa)). Residues Asp450, Asp456, Glu459, and Glu460 each contribute to the Mg(2+) site.

Belongs to the phenylalanyl-tRNA synthetase beta subunit family. Type 1 subfamily. In terms of assembly, tetramer of two alpha and two beta subunits. Mg(2+) serves as cofactor.

It is found in the cytoplasm. The catalysed reaction is tRNA(Phe) + L-phenylalanine + ATP = L-phenylalanyl-tRNA(Phe) + AMP + diphosphate + H(+). In Malacoplasma penetrans (strain HF-2) (Mycoplasma penetrans), this protein is Phenylalanine--tRNA ligase beta subunit.